Consider the following 190-residue polypeptide: Threonylcarbamoyl-AMP synthase (190 aa).

The 184-residue stretch at 7 to 190 (GDAIAAAIDV…ALTGELFRQG (184 aa)) folds into the YrdC-like domain.

It belongs to the SUA5 family. TsaC subfamily.

The protein localises to the cytoplasm. The enzyme catalyses L-threonine + hydrogencarbonate + ATP = L-threonylcarbamoyladenylate + diphosphate + H2O. Functionally, required for the formation of a threonylcarbamoyl group on adenosine at position 37 (t(6)A37) in tRNAs that read codons beginning with adenine. Catalyzes the conversion of L-threonine, HCO(3)(-)/CO(2) and ATP to give threonylcarbamoyl-AMP (TC-AMP) as the acyladenylate intermediate, with the release of diphosphate. This is Threonylcarbamoyl-AMP synthase from Shigella dysenteriae serotype 1 (strain Sd197).